Here is a 1366-residue protein sequence, read N- to C-terminus: DNA-directed RNA polymerase subunit beta' (1366 aa).

Residues 1–20 show a composition bias toward basic residues; the sequence is MTSSKPKKTSRVRKTTKNSK. Residues 1–33 are disordered; sequence MTSSKPKKTSRVRKTTKNSKKNNPVTMPALAKT. Cysteine 248, cysteine 315, cysteine 322, and cysteine 325 together coordinate Zn(2+). The disordered stretch occupies residues 1291 to 1366; that stretch reads YTVDMPQSPA…LQEEGLLSDE (76 aa). The span at 1354–1366 shows a compositional bias: low complexity; that stretch reads LEGLQEEGLLSDE.

This sequence belongs to the RNA polymerase beta' chain family. RpoC2 subfamily. In cyanobacteria the RNAP catalytic core is composed of 2 alpha, 1 beta, 1 beta', 1 gamma and 1 omega subunit. When a sigma factor is associated with the core the holoenzyme is formed, which can initiate transcription. Zn(2+) is required as a cofactor.

It catalyses the reaction RNA(n) + a ribonucleoside 5'-triphosphate = RNA(n+1) + diphosphate. Its function is as follows. DNA-dependent RNA polymerase catalyzes the transcription of DNA into RNA using the four ribonucleoside triphosphates as substrates. The sequence is that of DNA-directed RNA polymerase subunit beta' from Prochlorococcus marinus (strain AS9601).